A 246-amino-acid polypeptide reads, in one-letter code: Ribonuclease PH (246 aa).

Phosphate is bound by residues R91 and 129–131; that span reads GTR.

It belongs to the RNase PH family. Homohexameric ring arranged as a trimer of dimers.

The catalysed reaction is tRNA(n+1) + phosphate = tRNA(n) + a ribonucleoside 5'-diphosphate. In terms of biological role, phosphorolytic 3'-5' exoribonuclease that plays an important role in tRNA 3'-end maturation. Removes nucleotide residues following the 3'-CCA terminus of tRNAs; can also add nucleotides to the ends of RNA molecules by using nucleoside diphosphates as substrates, but this may not be physiologically important. Probably plays a role in initiation of 16S rRNA degradation (leading to ribosome degradation) during starvation. The sequence is that of Ribonuclease PH from Burkholderia vietnamiensis (strain G4 / LMG 22486) (Burkholderia cepacia (strain R1808)).